We begin with the raw amino-acid sequence, 332 residues long: Tetraacyldisaccharide 4'-kinase (332 aa).

52–59 (TLGGAGKT) contributes to the ATP binding site.

This sequence belongs to the LpxK family.

It catalyses the reaction a lipid A disaccharide + ATP = a lipid IVA + ADP + H(+). Its pathway is glycolipid biosynthesis; lipid IV(A) biosynthesis; lipid IV(A) from (3R)-3-hydroxytetradecanoyl-[acyl-carrier-protein] and UDP-N-acetyl-alpha-D-glucosamine: step 6/6. Transfers the gamma-phosphate of ATP to the 4'-position of a tetraacyldisaccharide 1-phosphate intermediate (termed DS-1-P) to form tetraacyldisaccharide 1,4'-bis-phosphate (lipid IVA). This chain is Tetraacyldisaccharide 4'-kinase, found in Methylobacterium sp. (strain 4-46).